The following is a 529-amino-acid chain: DNA-binding protein (529 aa).

The span at 1–17 (MASREEEQRETTPERGR) shows a compositional bias: basic and acidic residues. Disordered stretches follow at residues 1-107 (MASR…IVDS) and 125-166 (PVLI…AESE). Residues 129–139 (KHGKGGKRTVR) are compositionally biased toward basic residues. Positions 155 to 165 (EEEEEPSEAES) are enriched in acidic residues. Position 195 is a phosphotyrosine; by host (Y195). Residues C284 and H286 each coordinate Zn(2+). The flexible loop stretch occupies residues 297–331 (IEMDVTSENGQRALKEQSSKAKIVKNRWGRNVVQI). Zn(2+) contacts are provided by C339, C355, C396, C398, C450, and C467. Positions 513–529 (VSLPVAHSDARQNPFDF) are C-terminal arm, DBP binding.

The protein belongs to the adenoviridae E2A DNA-binding protein family. As to quaternary structure, homomultimerizes on viral ssDNA bound to pTP. Forms a initiation complex with viral polymerase, pTP and hosts NFIA and POU2F1/OCT1. Interacts with host SRCAP.

It is found in the host nucleus. Plays a role in the elongation phase of viral strand displacement replication by unwinding the template in an ATP-independent fashion, employing its capacity to form multimers. Also enhances the rate of initiation. Released from template upon second strand synthesis. Assembles in complex with viral pTP, viral pol, host NFIA and host POU2F1/OCT1 on viral origin of replication. Covers the whole ssDNA genome during synthesis. The complementary strand synthesis induces its relese from DNA template. May inhibit cellular transcription mediated by the interaction between host SRCAP and CBP. The chain is DNA-binding protein from Human adenovirus C serotype 5 (HAdV-5).